A 636-amino-acid chain; its full sequence is Phosphomethylpyrimidine synthase (636 aa).

The disordered stretch occupies residues 48-70; it reads DDTPTDFGGEKNPPVRVYDTSGP. Substrate-binding positions include Asn231, Met260, Tyr289, His325, 345 to 347, 386 to 389, and Glu425; these read SRG and DGLR. His429 is a binding site for Zn(2+). Tyr452 serves as a coordination point for substrate. His493 is a binding site for Zn(2+). Cys573, Cys576, and Cys581 together coordinate [4Fe-4S] cluster.

Belongs to the ThiC family. In terms of assembly, homodimer. Requires [4Fe-4S] cluster as cofactor.

It catalyses the reaction 5-amino-1-(5-phospho-beta-D-ribosyl)imidazole + S-adenosyl-L-methionine = 4-amino-2-methyl-5-(phosphooxymethyl)pyrimidine + CO + 5'-deoxyadenosine + formate + L-methionine + 3 H(+). The protein operates within cofactor biosynthesis; thiamine diphosphate biosynthesis. Its function is as follows. Catalyzes the synthesis of the hydroxymethylpyrimidine phosphate (HMP-P) moiety of thiamine from aminoimidazole ribotide (AIR) in a radical S-adenosyl-L-methionine (SAM)-dependent reaction. The chain is Phosphomethylpyrimidine synthase from Cellvibrio japonicus (strain Ueda107) (Pseudomonas fluorescens subsp. cellulosa).